The following is a 91-amino-acid chain: Small ribosomal subunit protein uS19 (91 aa).

The protein belongs to the universal ribosomal protein uS19 family.

Protein S19 forms a complex with S13 that binds strongly to the 16S ribosomal RNA. The protein is Small ribosomal subunit protein uS19 of Synechococcus sp. (strain CC9311).